The following is a 157-amino-acid chain: Endoribonuclease YbeY (157 aa).

Residues histidine 118, histidine 122, and histidine 128 each contribute to the Zn(2+) site.

This sequence belongs to the endoribonuclease YbeY family. Zn(2+) is required as a cofactor.

It localises to the cytoplasm. In terms of biological role, single strand-specific metallo-endoribonuclease involved in late-stage 70S ribosome quality control and in maturation of the 3' terminus of the 16S rRNA. The polypeptide is Endoribonuclease YbeY (Bordetella bronchiseptica (strain ATCC BAA-588 / NCTC 13252 / RB50) (Alcaligenes bronchisepticus)).